We begin with the raw amino-acid sequence, 568 residues long: 2-isopropylmalate synthase (568 aa).

A Pyruvate carboxyltransferase domain is found at 37–313; it reads PRWLSTDLRD…DPMIDFSNID (277 aa). Positions 46, 252, 254, and 288 each coordinate Mg(2+). Positions 455 to 568 are regulatory domain; sequence EGVVGVMAYR…CSAVNRAQQS (114 aa).

The protein belongs to the alpha-IPM synthase/homocitrate synthase family. LeuA type 2 subfamily. Homodimer. It depends on Mg(2+) as a cofactor.

Its subcellular location is the cytoplasm. It carries out the reaction 3-methyl-2-oxobutanoate + acetyl-CoA + H2O = (2S)-2-isopropylmalate + CoA + H(+). Its pathway is amino-acid biosynthesis; L-leucine biosynthesis; L-leucine from 3-methyl-2-oxobutanoate: step 1/4. Catalyzes the condensation of the acetyl group of acetyl-CoA with 3-methyl-2-oxobutanoate (2-ketoisovalerate) to form 3-carboxy-3-hydroxy-4-methylpentanoate (2-isopropylmalate). The polypeptide is 2-isopropylmalate synthase (Thermobifida fusca (strain YX)).